Reading from the N-terminus, the 1457-residue chain is Eye-specific diacylglycerol kinase (1457 aa).

3 disordered regions span residues 1 to 123 (MQQQ…SSEA), 136 to 177 (RSHS…PPCI), and 207 to 339 (YSNT…QPTT). Composition is skewed to low complexity over residues 22 to 62 (SATT…LRTT), 98 to 115 (SQRA…SSAS), and 141 to 154 (DSAT…DSGT). The span at 214 to 253 (ASEDEDEVEGHNAEEEEEGSAAIEDAEEETTEAATEEADE) shows a compositional bias: acidic residues. Residues 254–266 (DPRTEVESEHDHD) are compositionally biased toward basic and acidic residues. Positions 294–303 (RLPRQMRRHT) are enriched in basic residues. Phorbol-ester/DAG-type zinc fingers lie at residues 591 to 641 (HYWK…TLAC) and 661 to 724 (HHWV…GEEC). Residues 758–799 (NNAASGSGGGGAGGGAGGGGGKSKKQTQRRQKGKEEKKEPRA) are disordered. A compositionally biased stretch (gly residues) spans 763-778 (GSGGGGAGGGAGGGGG). The segment covering 779-789 (KSKKQTQRRQK) has biased composition (basic residues). A DAGKc domain is found at 808 to 944 (PEVIPVIVFI…MDRWRVKVTP (137 aa)). The tract at residues 1264 to 1302 (TPDQERSFAAFSQRQAQNERRQMDQAQGRGPGSTDEDLQ) is disordered. ANK repeat units lie at residues 1320–1349 (QTSD…SLQS), 1353–1382 (NGQT…RRLI), 1389–1418 (LGQT…HLDT), and 1422–1451 (GGNT…TQPV).

This sequence belongs to the eukaryotic diacylglycerol kinase family. Expressed specifically in adult eye.

It localises to the membrane. It carries out the reaction a 1,2-diacyl-sn-glycerol + ATP = a 1,2-diacyl-sn-glycero-3-phosphate + ADP + H(+). Functionally, required for the maintenance of phospholipid turnover within the photoreceptor. The sequence is that of Eye-specific diacylglycerol kinase (rdgA) from Drosophila melanogaster (Fruit fly).